Consider the following 851-residue polypeptide: Molybdenum cofactor sulfurase (851 aa).

Lys249 bears the N6-(pyridoxal phosphate)lysine mark. Cys413 is a catalytic residue. An MOSC domain is found at 665–844 (QYLRKFVMPG…LMVGDIVTPS (180 aa)).

Belongs to the class-V pyridoxal-phosphate-dependent aminotransferase family. MOCOS subfamily. Requires pyridoxal 5'-phosphate as cofactor.

The enzyme catalyses Mo-molybdopterin + L-cysteine + AH2 = thio-Mo-molybdopterin + L-alanine + A + H2O. It participates in cofactor biosynthesis; molybdopterin biosynthesis. Its function is as follows. Sulfurates the molybdenum cofactor. Sulfation of molybdenum is essential for xanthine dehydrogenase (XDH) and aldehyde oxidase (ADO) enzymes in which molybdenum cofactor is liganded by 1 oxygen and 1 sulfur atom in active form. The protein is Molybdenum cofactor sulfurase of Neosartorya fischeri (strain ATCC 1020 / DSM 3700 / CBS 544.65 / FGSC A1164 / JCM 1740 / NRRL 181 / WB 181) (Aspergillus fischerianus).